The sequence spans 349 residues: sn-glycerol-3-phosphate import ATP-binding protein UgpC (349 aa).

Positions 4–234 (ISLRDVRKSY…PATTFVAGFI (231 aa)) constitute an ABC transporter domain. 36–43 (GPSGCGKS) is a binding site for ATP.

It belongs to the ABC transporter superfamily. sn-glycerol-3-phosphate importer (TC 3.A.1.1.3) family. As to quaternary structure, the complex is composed of two ATP-binding proteins (UgpC), two transmembrane proteins (UgpA and UgpE) and a solute-binding protein (UgpB).

It localises to the cell inner membrane. The enzyme catalyses sn-glycerol 3-phosphate(out) + ATP + H2O = sn-glycerol 3-phosphate(in) + ADP + phosphate + H(+). In terms of biological role, part of the ABC transporter complex UgpBAEC involved in sn-glycerol-3-phosphate (G3P) import. Responsible for energy coupling to the transport system. In Cereibacter sphaeroides (strain ATCC 17023 / DSM 158 / JCM 6121 / CCUG 31486 / LMG 2827 / NBRC 12203 / NCIMB 8253 / ATH 2.4.1.) (Rhodobacter sphaeroides), this protein is sn-glycerol-3-phosphate import ATP-binding protein UgpC.